We begin with the raw amino-acid sequence, 297 residues long: Phosphoribosylaminoimidazole-succinocarboxamide synthase (297 aa).

This sequence belongs to the SAICAR synthetase family.

The catalysed reaction is 5-amino-1-(5-phospho-D-ribosyl)imidazole-4-carboxylate + L-aspartate + ATP = (2S)-2-[5-amino-1-(5-phospho-beta-D-ribosyl)imidazole-4-carboxamido]succinate + ADP + phosphate + 2 H(+). It participates in purine metabolism; IMP biosynthesis via de novo pathway; 5-amino-1-(5-phospho-D-ribosyl)imidazole-4-carboxamide from 5-amino-1-(5-phospho-D-ribosyl)imidazole-4-carboxylate: step 1/2. The chain is Phosphoribosylaminoimidazole-succinocarboxamide synthase from Corynebacterium diphtheriae (strain ATCC 700971 / NCTC 13129 / Biotype gravis).